We begin with the raw amino-acid sequence, 457 residues long: Multidrug resistance protein MdtK (457 aa).

12 helical membrane-spanning segments follow: residues 11-31 (LLALGIPVIIAQFSQTAMGVV), 53-73 (IWLPVILFGYGLLLALTPIIA), 93-113 (WLAIFLSIIIIAILYNSKFLI), 127-147 (AVGFIHAIMWGAPGYLFYQVL), 160-180 (GMVISFLGLLINIPINYIFIY), 188-208 (LGGVGCGVATASVYWVMFLLM), 243-263 (LPIAMAVFFEITLFAIVALLI), 280-300 (FSSLMFMFPISLAAATTIRVG), 316-336 (YTGIMVGLVFACLTATFSIIL), 357-377 (LMLFAALYQLSDAIQVVGAGV), 387-407 (IFYITFIAFWILGLPSGYILG), and 418-438 (PQGFWIGFIIGLTASAVMIFA).

Belongs to the multi antimicrobial extrusion (MATE) (TC 2.A.66.1) family. MdtK subfamily.

It localises to the cell inner membrane. Multidrug efflux pump that functions probably as a Na(+)/drug antiporter. This Photorhabdus laumondii subsp. laumondii (strain DSM 15139 / CIP 105565 / TT01) (Photorhabdus luminescens subsp. laumondii) protein is Multidrug resistance protein MdtK.